A 399-amino-acid chain; its full sequence is Dual-specificity RNA methyltransferase RlmN (399 aa).

E120 functions as the Proton acceptor in the catalytic mechanism. The 242-residue stretch at 126–367 (EEGRGTLCVS…SPVRTPRGRD (242 aa)) folds into the Radical SAM core domain. C133 and C372 are disulfide-bonded. Residues C140, C144, and C147 each contribute to the [4Fe-4S] cluster site. Residues 198-199 (GE), S230, 252-254 (SLH), and N329 each bind S-adenosyl-L-methionine. Residue C372 is the S-methylcysteine intermediate of the active site.

This sequence belongs to the radical SAM superfamily. RlmN family. The cofactor is [4Fe-4S] cluster.

The protein resides in the cytoplasm. It carries out the reaction adenosine(2503) in 23S rRNA + 2 reduced [2Fe-2S]-[ferredoxin] + 2 S-adenosyl-L-methionine = 2-methyladenosine(2503) in 23S rRNA + 5'-deoxyadenosine + L-methionine + 2 oxidized [2Fe-2S]-[ferredoxin] + S-adenosyl-L-homocysteine. The enzyme catalyses adenosine(37) in tRNA + 2 reduced [2Fe-2S]-[ferredoxin] + 2 S-adenosyl-L-methionine = 2-methyladenosine(37) in tRNA + 5'-deoxyadenosine + L-methionine + 2 oxidized [2Fe-2S]-[ferredoxin] + S-adenosyl-L-homocysteine. Specifically methylates position 2 of adenine 2503 in 23S rRNA and position 2 of adenine 37 in tRNAs. m2A2503 modification seems to play a crucial role in the proofreading step occurring at the peptidyl transferase center and thus would serve to optimize ribosomal fidelity. In Parvibaculum lavamentivorans (strain DS-1 / DSM 13023 / NCIMB 13966), this protein is Dual-specificity RNA methyltransferase RlmN.